The chain runs to 239 residues: Ribosomal RNA small subunit methyltransferase G (239 aa).

S-adenosyl-L-methionine-binding positions include Gly78, Phe83, Ala129–Glu130, and Arg148.

The protein belongs to the methyltransferase superfamily. RNA methyltransferase RsmG family.

It is found in the cytoplasm. In terms of biological role, specifically methylates the N7 position of a guanine in 16S rRNA. The sequence is that of Ribosomal RNA small subunit methyltransferase G from Clostridium botulinum (strain 657 / Type Ba4).